We begin with the raw amino-acid sequence, 863 residues long: Linoleate 9S-lipoxygenase 1 (863 aa).

One can recognise a PLAT domain in the interval 32–158; sequence RDFTASLLDN…KYHYNRIFFA (127 aa). A Lipoxygenase domain is found at 161–863; it reads SYLPSQMPEA…ARGIPNSISI (703 aa). The tract at residues 204–244 is disordered; that stretch reads NDLGEPDRDNPRPVLGGSQKHPYPRRGRTGRIPTKKDPNSE. Residues H518, H523, H709, N713, and I863 each contribute to the Fe cation site.

Belongs to the lipoxygenase family. Monomer. Fe cation serves as cofactor.

It localises to the cytoplasm. The catalysed reaction is (9Z,12Z)-octadecadienoate + O2 = (9S)-hydroperoxy-(10E,12Z)-octadecadienoate. It participates in lipid metabolism; oxylipin biosynthesis. Functionally, plant lipoxygenase may be involved in a number of diverse aspects of plant physiology including growth and development, pest resistance, and senescence or responses to wounding. This lipoxygenase introduces molecular oxygen exclusively into the C-9 position of linoleic and linolenic. The protein is Linoleate 9S-lipoxygenase 1 of Oryza sativa subsp. japonica (Rice).